The sequence spans 264 residues: Mannose-specific lectin CEA (264 aa).

Positions Met1–Ala23 are cleaved as a signal peptide. 2 consecutive Bulb-type lectin domains span residues Thr26–Pro131 and Asn145–Lys252. Beta-D-mannose-binding positions include Gln51–Asn55, Tyr59, Trp63, Gln64, Gln170–Asn174, Tyr178, and Tyr182–Gln185. The Carbohydrate-binding motif 1 signature appears at Gln51–Tyr59. Intrachain disulfides connect Cys54–Cys74 and Cys173–Cys195. The short motif at Gln170 to Tyr178 is the Carbohydrate-binding motif 2 element.

In terms of assembly, forms heterotetramer of 2 chains 1 and 2 chains 2 arranged as a dimer of chain 1 and chain 2 heterodimers.

Its subcellular location is the secreted. In terms of biological role, mannose-specific lectin. Shows agglutinating activity towards erythrocytes from rabbit. Has insecticidal activity against cotton aphids and other hemipteran insects. The sequence is that of Mannose-specific lectin CEA from Colocasia esculenta (Wild taro).